We begin with the raw amino-acid sequence, 450 residues long: Sorting nexin-4 (450 aa).

Met-1 is subject to N-acetylmethionine. A disordered region spans residues 1-46 (MEQAPPDPERQLQPAPLEPLGSPDAGLGAAVGKEAEGAGEESSGVD). Ser-22 is modified (phosphoserine). Residues 61-187 (SVSEAEKRTG…YLFLTQEGNW (127 aa)) enclose the PX domain. 4 residues coordinate a 1,2-diacyl-sn-glycero-3-phospho-(1D-myo-inositol-3-phosphate): Arg-106, Ser-108, Lys-132, and Arg-154.

This sequence belongs to the sorting nexin family. As to quaternary structure, heterodimer; heterodimerizes with SNX7 or SNX30. Interacts with WWC1/KIBRA. Identified in a complex with WWC1/KIBRA and dynein components DYNLL1 and DYNC1I2. Interacts with BIN1.

The protein resides in the early endosome membrane. Involved in the regulation of endocytosis and in several stages of intracellular trafficking. Plays a role in recycling endocytosed transferrin receptor and prevent its degradation. Involved in autophagosome assembly by regulating trafficking and recycling of phospholipid scramblase ATG9A. The chain is Sorting nexin-4 from Homo sapiens (Human).